Reading from the N-terminus, the 59-residue chain is Large ribosomal subunit protein uL30 (59 aa).

This sequence belongs to the universal ribosomal protein uL30 family. In terms of assembly, part of the 50S ribosomal subunit.

This chain is Large ribosomal subunit protein uL30, found in Leptospira biflexa serovar Patoc (strain Patoc 1 / ATCC 23582 / Paris).